Reading from the N-terminus, the 72-residue chain is Translation initiation factor IF-1 (72 aa).

The region spanning 1 to 72 is the S1-like domain; the sequence is MAKEEAIEVE…TRGRIIFRER (72 aa).

It belongs to the IF-1 family. In terms of assembly, component of the 30S ribosomal translation pre-initiation complex which assembles on the 30S ribosome in the order IF-2 and IF-3, IF-1 and N-formylmethionyl-tRNA(fMet); mRNA recruitment can occur at any time during PIC assembly.

It is found in the cytoplasm. In terms of biological role, one of the essential components for the initiation of protein synthesis. Stabilizes the binding of IF-2 and IF-3 on the 30S subunit to which N-formylmethionyl-tRNA(fMet) subsequently binds. Helps modulate mRNA selection, yielding the 30S pre-initiation complex (PIC). Upon addition of the 50S ribosomal subunit IF-1, IF-2 and IF-3 are released leaving the mature 70S translation initiation complex. The protein is Translation initiation factor IF-1 of Treponema denticola (strain ATCC 35405 / DSM 14222 / CIP 103919 / JCM 8153 / KCTC 15104).